Here is a 152-residue protein sequence, read N- to C-terminus: CASP-like protein 5C1 (152 aa).

The Cytoplasmic segment spans residues 1-12 (MVRTTASFGTSS). Residues 13–33 (SFVLRLGQTLFSSASLLFMCF) traverse the membrane as a helical segment. The Extracellular segment spans residues 34–44 (NDDEDFYAYTT). Residues 45–65 (FCYLVTVMGLVTPWSVTLALM) traverse the membrane as a helical segment. Over 66–80 (EAYSILVKKLPMQAT) the chain is Cytoplasmic. A helical transmembrane segment spans residues 81–101 (VISVIVAGDFVLSFLSLGGAC). The Extracellular segment spans residues 102–126 (STASVAVLLMDAGEKQCDRYKLSAT). Residues 127–147 (MAFLSSFLSFASTFFNFCLLP) traverse the membrane as a helical segment. Residues 148–152 (SLMSH) are Cytoplasmic-facing.

It belongs to the Casparian strip membrane proteins (CASP) family. As to quaternary structure, homodimer and heterodimers.

The protein localises to the cell membrane. This is CASP-like protein 5C1 from Arabidopsis thaliana (Mouse-ear cress).